Consider the following 113-residue polypeptide: TYRO protein tyrosine kinase-binding protein (113 aa).

Residues 1–27 (MGGLEPCSRLLLLPLLLAVGGLRPVQA) form the signal peptide. Residues 28-40 (QAQSDCSCSTVSP) lie on the Extracellular side of the membrane. Residues 41–61 (GVLAGIVMGDLVLTVLIALAV) form a helical membrane-spanning segment. Asp50 provides a ligand contact to Ca(2+). The Cytoplasmic segment spans residues 62 to 113 (YFLGRLVHRGRGAAEAATRKQRITETESPYQELQGQRSDVYSDLNMQRPYYK). The tract at residues 75–113 (AEAATRKQRITETESPYQELQGQRSDVYSDLNMQRPYYK) is disordered. In terms of domain architecture, ITAM spans 80–108 (RKQRITETESPYQELQGQRSDVYSDLNMQ). The segment covering 87–100 (TESPYQELQGQRSD) has biased composition (polar residues). A phosphotyrosine mark is found at Tyr91 and Tyr102.

This sequence belongs to the TYROBP family. As to quaternary structure, homodimer; disulfide-linked. Homotrimer; disulfide-linked. Homotetramer; disulfide-linked. Homotrimers and homotetramers form when low levels of partner receptors are available and is competitive with assembly with interacting receptors. They may represent alternative oligomerization states or may be intermediates in the receptor assembly process. Binding of a metal cation aids in homooligomerization through coordination of the metal ion by the subunits of the oligomer. Interacts with TREM1. Interacts with TREM2. Interacts with CLECSF5. Interacts with CD300LB and CD300C2. Interacts with CD300E. Interacts (via ITAM domain) with SYK (via SH2 domains); activates SYK mediating neutrophils and macrophages integrin-mediated activation. Interacts with KLRC2. Interacts with CD300H. Interacts with KLRD1. Interacts with SIGLEC1. Following ligand binding by associated receptors, tyrosine phosphorylated in the ITAM domain which leads to activation of additional tyrosine kinases and subsequent cell activation.

It is found in the cell membrane. Functionally, adapter protein which non-covalently associates with activating receptors found on the surface of a variety of immune cells to mediate signaling and cell activation following ligand binding by the receptors. TYROBP is tyrosine-phosphorylated in the ITAM domain following ligand binding by the associated receptors which leads to activation of additional tyrosine kinases and subsequent cell activation. Also has an inhibitory role in some cells. Non-covalently associates with activating receptors of the CD300 family to mediate cell activation. Also mediates cell activation through association with activating receptors of the CD200R family. Required for neutrophil activation mediated by integrin. Required for the activation of myeloid cells mediated by the CLEC5A/MDL1 receptor. Associates with natural killer (NK) cell receptors such as the KLRD1/KLRC2 heterodimer to mediate NK cell activation. Associates with TREM1 to mediate activation of neutrophils and monocytes. Associates with TREM2 on monocyte-derived dendritic cells to mediate up-regulation of chemokine receptor CCR7 and dendritic cell maturation and survival. Association with TREM2 mediates cytokine-induced formation of multinucleated giant cells which are formed by the fusion of macrophages. Stabilizes the TREM2 C-terminal fragment (TREM2-CTF) produced by TREM2 ectodomain shedding which suppresses the release of pro-inflammatory cytokines. In microglia, required with TREM2 for phagocytosis of apoptotic neurons. Required with ITGAM/CD11B in microglia to control production of microglial superoxide ions which promote the neuronal apoptosis that occurs during brain development. Promotes pro-inflammatory responses in microglia following nerve injury which accelerates degeneration of injured neurons. Positively regulates the expression of the IRAK3/IRAK-M kinase and IL10 production by liver dendritic cells and inhibits their T cell allosimulatory ability. Negatively regulates B cell proliferation. Required for CSF1-mediated osteoclast cytoskeletal organization. Positively regulates multinucleation during osteoclast development. In Pan troglodytes (Chimpanzee), this protein is TYRO protein tyrosine kinase-binding protein.